The chain runs to 417 residues: MTEYLSVSTLTKYLKAKFERDPYLERVYLTGEISNFRRRPNHQYFALKDEGAVIQATMWAGQFRKLDFELEEGMKVLAIGRISIYPPSGSYSINIESLVPDGVGALALKFEQLKKKLAAEGLFDQRWKQNLPQFSKKIAVVTSPSGAVIRDIITTVQRRFPMSQIVLYPTKVQGAGAAEEISGNIRRANERGDFDVMIIGRGGGSIEDLWGFNEEIVVRAIFESRIPIISSVGHETDVTLADFVADSRAATPTAAAELATPNTKIDLINWANEQESRLFNRLTHLIKIRRERLEKLSQSVVFRQPERLYDGHVQKLDRLCERLTVLTENKVANMKHRYELSANRLIPTYSKIVESKKNKTEQLYQSLLLLDISKIKARGFSLITDENGKIIKSVSDVKKGQALDVELTDGQVKVEVK.

It belongs to the XseA family. As to quaternary structure, heterooligomer composed of large and small subunits.

Its subcellular location is the cytoplasm. The enzyme catalyses Exonucleolytic cleavage in either 5'- to 3'- or 3'- to 5'-direction to yield nucleoside 5'-phosphates.. Its function is as follows. Bidirectionally degrades single-stranded DNA into large acid-insoluble oligonucleotides, which are then degraded further into small acid-soluble oligonucleotides. In Lactococcus lactis subsp. cremoris (strain MG1363), this protein is Exodeoxyribonuclease 7 large subunit.